The following is a 305-amino-acid chain: Oxygen-dependent coproporphyrinogen-III oxidase (305 aa).

Residue Ser99 coordinates substrate. Residues His103 and His113 each coordinate a divalent metal cation. The Proton donor role is filled by His113. Asn115 to Arg117 serves as a coordination point for substrate. Residues His152 and His182 each contribute to the a divalent metal cation site. The interval Tyr247–Glu282 is important for dimerization. Residue Gly265 to Arg267 participates in substrate binding.

It belongs to the aerobic coproporphyrinogen-III oxidase family. As to quaternary structure, homodimer. It depends on a divalent metal cation as a cofactor.

The protein resides in the cytoplasm. It catalyses the reaction coproporphyrinogen III + O2 + 2 H(+) = protoporphyrinogen IX + 2 CO2 + 2 H2O. It participates in porphyrin-containing compound metabolism; protoporphyrin-IX biosynthesis; protoporphyrinogen-IX from coproporphyrinogen-III (O2 route): step 1/1. In terms of biological role, involved in the heme biosynthesis. Catalyzes the aerobic oxidative decarboxylation of propionate groups of rings A and B of coproporphyrinogen-III to yield the vinyl groups in protoporphyrinogen-IX. The chain is Oxygen-dependent coproporphyrinogen-III oxidase from Vibrio cholerae serotype O1 (strain ATCC 39541 / Classical Ogawa 395 / O395).